An 811-amino-acid chain; its full sequence is Potassium transporter 27 (811 aa).

Residues 1-64 lie on the Cytoplasmic side of the membrane; it reads MGDDVLGRGS…QEESWARTLK (64 aa). Residues 65-85 form a helical membrane-spanning segment; sequence LAFQCVGILYGDIGTSPLFVY. Topologically, residues 86-102 are extracellular; that stretch reads SSTFKDGVRHPDDLLGA. The helical transmembrane segment at 103–123 threads the bilayer; the sequence is LSLIIYSFALFTIVKYVFIAL. Over 124–188 the chain is Cytoplasmic; it reads RANDDGDGGT…ELLETNRAVK (65 aa). The helical transmembrane segment at 189-209 threads the bilayer; sequence IWLFLLTILATAMVISDAVLT. The Extracellular segment spans residues 210–226; that stretch reads PAISVLSAVGGLKEKAP. Residues 227–247 traverse the membrane as a helical segment; the sequence is NLTTDEIVWITVATLVVLFAI. At 248 to 254 the chain is on the cytoplasmic side; it reads QRFGTDK. A helical transmembrane segment spans residues 255–275; sequence IGYLFAPIILLWLLLIGCVGI. At 276 to 310 the chain is on the extracellular side; that stretch reads YNTIKFDTGVLRAFNLKYIIDYFRRNKKDGWISLS. The chain crosses the membrane as a helical span at residues 311–331; it reads GILLCFTGTEALFSDLGYFSI. Topologically, residues 332 to 335 are cytoplasmic; sequence RSIQ. The chain crosses the membrane as a helical span at residues 336-356; the sequence is LSFSFGLVPSVLLAYIGQAAY. The Extracellular portion of the chain corresponds to 357–375; it reads LREHPEHIANTFYRSTPNV. Residues 376-396 traverse the membrane as a helical segment; the sequence is MFWPTFILAVAASIIGSQAMI. Topologically, residues 397 to 434 are cytoplasmic; it reads SCAFATISHLQTLNCFPRVKILHTSRQYSGQLYIPEVN. The chain crosses the membrane as a helical span at residues 435–455; the sequence is FLLCVGACLVTIGFKTTVIIG. Over 456–459 the chain is Extracellular; that stretch reads EAHA. Residues 460 to 480 form a helical membrane-spanning segment; it reads ICVVFVMIITTLLLTIVMLLV. Over 481–482 the chain is Cytoplasmic; it reads WK. A helical membrane pass occupies residues 483 to 503; sequence VSIWYVALFFIVFMSSESIYL. The Extracellular segment spans residues 504-515; the sequence is SAVLYQFVHGEY. Residues 516 to 536 traverse the membrane as a helical segment; sequence VPVAMSVFLMIVMTVWHYVHV. Over 537–811 the chain is Cytoplasmic; that stretch reads KRYEFELEHT…VLKVGIAYEI (275 aa).

This sequence belongs to the HAK/KUP transporter (TC 2.A.72.3) family.

The protein localises to the membrane. Functionally, high-affinity potassium transporter. This is Potassium transporter 27 (HAK27) from Oryza sativa subsp. japonica (Rice).